The primary structure comprises 303 residues: 4-diphosphocytidyl-2-C-methyl-D-erythritol kinase (303 aa).

The active site involves K18. 111 to 121 (PVASGIGGGSA) lines the ATP pocket. Residue D153 is part of the active site.

It belongs to the GHMP kinase family. IspE subfamily.

The catalysed reaction is 4-CDP-2-C-methyl-D-erythritol + ATP = 4-CDP-2-C-methyl-D-erythritol 2-phosphate + ADP + H(+). The protein operates within isoprenoid biosynthesis; isopentenyl diphosphate biosynthesis via DXP pathway; isopentenyl diphosphate from 1-deoxy-D-xylulose 5-phosphate: step 3/6. In terms of biological role, catalyzes the phosphorylation of the position 2 hydroxy group of 4-diphosphocytidyl-2C-methyl-D-erythritol. This is 4-diphosphocytidyl-2-C-methyl-D-erythritol kinase from Sinorhizobium medicae (strain WSM419) (Ensifer medicae).